We begin with the raw amino-acid sequence, 335 residues long: UPF0353 protein Mjls_2492 (335 aa).

2 consecutive transmembrane segments (helical) span residues 18-38 (WFFL…IVAL) and 67-87 (LPAI…AGPT). In terms of domain architecture, VWFA spans 98–294 (VVMLVIDVSQ…EQLREVYANL (197 aa)). Residues 309-329 (VGWLRLGALVLALSALAALLL) form a helical membrane-spanning segment.

Belongs to the UPF0353 family.

The protein resides in the cell membrane. In Mycobacterium sp. (strain JLS), this protein is UPF0353 protein Mjls_2492.